The primary structure comprises 107 residues: C-X-C motif chemokine 3 (107 aa).

A signal peptide spans 1 to 34; the sequence is MAHATLSAAPSNPRLLRVALLLLLLVAASRRAAG. 2 disulfide bridges follow: C43/C69 and C45/C85.

The protein belongs to the intercrine alpha (chemokine CxC) family. N-terminal processed form GRO-gamma(5-73) is produced by proteolytic cleavage after secretion from peripheral blood monocytes.

It is found in the secreted. Ligand for CXCR2. Has chemotactic activity for neutrophils. May play a role in inflammation and exert its effects on endothelial cells in an autocrine fashion. In vitro, the processed form GRO-gamma(5-73) shows a fivefold higher chemotactic activity for neutrophilic granulocytes. The polypeptide is C-X-C motif chemokine 3 (CXCL3) (Homo sapiens (Human)).